Consider the following 305-residue polypeptide: Probable cell division protein WhiA (305 aa).

Residues 269-302 (TIKELGELLDPPLGKSGVNHRLRKLVERSNDLKK) constitute a DNA-binding region (H-T-H motif).

It belongs to the WhiA family.

In terms of biological role, involved in cell division and chromosome segregation. This Lactococcus lactis subsp. cremoris (strain MG1363) protein is Probable cell division protein WhiA.